The sequence spans 147 residues: Large ribosomal subunit protein bL9 (147 aa).

This sequence belongs to the bacterial ribosomal protein bL9 family.

Functionally, binds to the 23S rRNA. This is Large ribosomal subunit protein bL9 from Clostridium novyi (strain NT).